Here is a 315-residue protein sequence, read N- to C-terminus: Methionyl-tRNA formyltransferase (315 aa).

113-116 (SLLP) is a binding site for (6S)-5,6,7,8-tetrahydrofolate.

This sequence belongs to the Fmt family.

It carries out the reaction L-methionyl-tRNA(fMet) + (6R)-10-formyltetrahydrofolate = N-formyl-L-methionyl-tRNA(fMet) + (6S)-5,6,7,8-tetrahydrofolate + H(+). Functionally, attaches a formyl group to the free amino group of methionyl-tRNA(fMet). The formyl group appears to play a dual role in the initiator identity of N-formylmethionyl-tRNA by promoting its recognition by IF2 and preventing the misappropriation of this tRNA by the elongation apparatus. In Pseudoalteromonas atlantica (strain T6c / ATCC BAA-1087), this protein is Methionyl-tRNA formyltransferase.